A 116-amino-acid chain; its full sequence is MLVLVGLAGAGAAVGALSRYGIMRLALPLNRWPLPIATLFINLTGALLLGWILTSSLPPNWQIFLGTGIMGGYTTFSTMINELVLLGRNHHQRVAWEYFGLSLVGGLVMVYLGTLI.

The next 4 helical transmembrane spans lie at 2 to 22 (LVLVGLAGAGAAVGALSRYGI), 33 to 53 (PLPIATLFINLTGALLLGWIL), 63 to 83 (IFLGTGIMGGYTTFSTMINEL), and 96 to 116 (WEYFGLSLVGGLVMVYLGTLI). Na(+) contacts are provided by G71 and T74.

Belongs to the fluoride channel Fluc/FEX (TC 1.A.43) family.

The protein localises to the cell membrane. It carries out the reaction fluoride(in) = fluoride(out). Na(+) is not transported, but it plays an essential structural role and its presence is essential for fluoride channel function. Its function is as follows. Fluoride-specific ion channel. Important for reducing fluoride concentration in the cell, thus reducing its toxicity. This Lactiplantibacillus plantarum (strain ATCC BAA-793 / NCIMB 8826 / WCFS1) (Lactobacillus plantarum) protein is Fluoride-specific ion channel FluC 1.